Here is a 604-residue protein sequence, read N- to C-terminus: Prostaglandin G/H synthase 2 (604 aa).

The N-terminal stretch at methionine 1–alanine 17 is a signal peptide. The EGF-like domain maps to alanine 18–threonine 55. 4 disulfides stabilise this stretch: cysteine 21/cysteine 32, cysteine 22/cysteine 145, cysteine 26/cysteine 42, and cysteine 44/cysteine 54. Asparagine 53 is a glycosylation site (N-linked (GlcNAc...) asparagine). Arginine 106 contributes to the substrate binding site. Residue asparagine 130 is glycosylated (N-linked (GlcNAc...) asparagine). Histidine 193 (proton acceptor) is an active-site residue. Tyrosine 341 contributes to the substrate binding site. Residue tyrosine 371 is the For cyclooxygenase activity of the active site. Position 374 (histidine 374) interacts with heme b. N-linked (GlcNAc...) asparagine glycosylation occurs at asparagine 396. An S-nitrosocysteine modification is found at cysteine 526. A disulfide bond links cysteine 555 and cysteine 561. An N-linked (GlcNAc...) asparagine glycan is attached at asparagine 580.

The protein belongs to the prostaglandin G/H synthase family. Homodimer. It depends on heme b as a cofactor. S-nitrosylation by NOS2 (iNOS) activates enzyme activity. S-nitrosylation may take place on different Cys residues in addition to Cys-526.

It is found in the microsome membrane. It localises to the endoplasmic reticulum membrane. The protein resides in the nucleus inner membrane. The protein localises to the nucleus outer membrane. The enzyme catalyses (5Z,8Z,11Z,14Z)-eicosatetraenoate + AH2 + 2 O2 = prostaglandin H2 + A + H2O. It catalyses the reaction (5Z,8Z,11Z,14Z)-eicosatetraenoate + 2 O2 = prostaglandin G2. The catalysed reaction is prostaglandin G2 + AH2 = prostaglandin H2 + A + H2O. It carries out the reaction (5Z,8Z,11Z,14Z,17Z)-eicosapentaenoate + 2 O2 = prostaglandin G3. The enzyme catalyses prostaglandin G3 + AH2 = prostaglandin H3 + A + H2O. It catalyses the reaction (8Z,11Z,14Z)-eicosatrienoate + 2 O2 = prostaglandin G1. The catalysed reaction is prostaglandin G1 + AH2 = prostaglandin H1 + A + H2O. It carries out the reaction 2-(5Z,8Z,11Z,14Z)-eicosatetraenoyl-sn-glycero-3-phosphoethanolamine + 2 O2 = 2-(prostaglandin G2)-sn-glycero-3-phosphoethanolamine. The enzyme catalyses 2-(prostaglandin G2)-sn-glycero-3-phosphoethanolamine + AH2 = 2-(prostaglandin H2)-sn-glycero-3-phosphoethanolamine + A + H2O. It catalyses the reaction 2-(5Z,8Z,11Z,14Z)-eicosatetraenoyl-sn-glycero-3-phosphocholine + 2 O2 = 2-(prostaglandin G2)-sn-glycero-3-phosphocholine. The catalysed reaction is 2-(prostaglandin G2)-sn-glycero-3-phosphocholine + AH2 = 2-(prostaglandin H2)-sn-glycero-3-phosphocholine + A + H2O. It carries out the reaction (15S)-hydroperoxy-(5Z,8Z,11Z,13E)-eicosatetraenoate + AH2 = (15S)-hydroxy-(5Z,8Z,11Z,13E)-eicosatetraenoate + A + H2O. The enzyme catalyses 2-(5Z,8Z,11Z,14Z)-eicosatetraenoyl-sn-glycero-3-phosphocholine + AH2 + O2 = 2-[(15S)-hydroxy-(5Z,8Z,11Z,13E)-eicosatetraenoyl]-sn-glycero-3-phosphocholine + A + H2O. It catalyses the reaction 2-(5Z,8Z,11Z,14Z)-eicosatetraenoyl-sn-glycero-3-phosphocholine + AH2 + O2 = 2-[(15R)-hydroxy-(5Z,8Z,11Z,13E)-eicosatetraenoyl]-sn-glycero-3-phosphocholine + A + H2O. The catalysed reaction is 2-(5Z,8Z,11Z,14Z)-eicosatetraenoyl-sn-glycero-3-phosphocholine + AH2 + O2 = 2-[(11R)-hydroxy-(5Z,8Z,12E,14Z)-eicosatetraenoyl]-sn-glycero-3-phosphocholine + A + H2O. It carries out the reaction (9Z,12Z)-octadecadienoate + AH2 + O2 = 9-hydroxy-(10E,12Z)-octadecadienoate + A + H2O. The enzyme catalyses (9Z,12Z)-octadecadienoate + AH2 + O2 = 13-hydroxy-(9Z,11E)-octadecadienoate + A + H2O. It catalyses the reaction (5Z,8Z,11Z,14Z)-eicosatetraenoate + AH2 + O2 = (15R)-hydroxy-(5Z,8Z,11Z,13E)-eicosatetraenoate + A + H2O. The catalysed reaction is (5Z,8Z,11Z,14Z)-eicosatetraenoate + AH2 + O2 = (11R)-hydroxy-(5Z,8Z,12E,14Z)-eicosatetraenoate + A + H2O. It carries out the reaction (5Z,8Z,11Z,14Z,17Z)-eicosapentaenoate + AH2 + O2 = (11R)-hydroxy-(5Z,8Z,12E,14Z,17Z)-eicosapentaenoate + A + H2O. The enzyme catalyses (5Z,8Z,11Z,14Z,17Z)-eicosapentaenoate + AH2 + O2 = (18S)-hydroxy-(5Z,8Z,11Z,14Z,16E)-eicosapentaenoate + A + H2O. It catalyses the reaction (5Z,8Z,11Z,14Z,17Z)-eicosapentaenoate + AH2 + O2 = (18R)-hydroxy-(5Z,8Z,11Z,14Z,16E)-eicosapentaenoate + A + H2O. The catalysed reaction is (5Z,8Z,11Z,14Z,17Z)-eicosapentaenoate + AH2 + O2 = (15R)-hydroxy-(5Z,8Z,11Z,13E,17Z)-eicosapentaenoate + A + H2O. It carries out the reaction (5Z,8Z,11Z,14Z,17Z)-eicosapentaenoate + AH2 + O2 = (15S)-hydroxy-(5Z,8Z,11Z,13E,17Z)-eicosapentaenoate + A + H2O. The enzyme catalyses (7Z,10Z,13Z,16Z,19Z)-docosapentaenoate + AH2 + O2 = 13R-hydroxy-(7Z,10Z,14E,16Z,19Z)-docosapentaenoate + A + H2O. It catalyses the reaction (4Z,7Z,10Z,13Z,16Z,19Z)-docosahexaenoate + AH2 + O2 = 13-hydroxy-(4Z,7Z,10Z,14E,16Z,19Z)-docosahexaenoate + A + H2O. The catalysed reaction is (5S)-hydroxy-(6E,8Z,11Z,14Z)-eicosatetraenoate + AH2 + O2 = (5S,15R)-dihydroxy-(6E,8Z,11Z,13E)-eicosatetraenoate + A + H2O. It carries out the reaction (4Z,7Z,10Z,13Z,16Z,19Z)-docosahexaenoate + AH2 + O2 = 17R-hydroxy-(4Z,7Z,10Z,13Z,15E,19Z)-docosahexaenoate + A + H2O. The enzyme catalyses (5S)-hydroxy-(6E,8Z,11Z,14Z)-eicosatetraenoate + AH2 + O2 = (5S,15S)-dihydroxy-(6E,8Z,11Z,13E)-eicosatetraenoate + A + H2O. It catalyses the reaction (5S)-hydroxy-(6E,8Z,11Z,14Z)-eicosatetraenoate + AH2 + O2 = (5S,11R)-dihydroxy-(6E,8Z,12E,14Z)-eicosatetraenoate + A + H2O. The catalysed reaction is 2-(5Z,8Z,11Z,14Z-eicosatetraenoyl)-glycerol + 2 O2 = 2-glyceryl-prostaglandin G2. It carries out the reaction 2-glyceryl-prostaglandin G2 + AH2 = 2-glyceryl-prostaglandin H2 + A + H2O. The enzyme catalyses (5Z,8Z,11Z,14Z)-eicosatetraenoate + O2 = (15R)-hydroperoxy-(5Z,8Z,11Z,13E)-eicosatetraenoate. It catalyses the reaction (5Z,8Z,11Z,14Z)-eicosatetraenoate + O2 = 11R-hydroperoxy-(5Z,8Z,12E,14Z)-eicosatetraenoate. The catalysed reaction is (9Z,12Z)-octadecadienoate + AH2 + O2 = (9R)-hydroxy-(10E,12Z)-octadecadienoate + A + H2O. It carries out the reaction (9Z,12Z)-octadecadienoate + AH2 + O2 = (9S)-hydroxy-(10E,12Z)-octadecadienoate + A + H2O. The enzyme catalyses (9Z,12Z)-octadecadienoate + AH2 + O2 = (13S)-hydroxy-(9Z,11E)-octadecadienoate + A + H2O. It catalyses the reaction (9Z,12Z)-octadecadienoate + AH2 + O2 = (13R)-hydroxy-(9Z,11E)-octadecadienoate + A + H2O. It participates in lipid metabolism; prostaglandin biosynthesis. Its function is as follows. Dual cyclooxygenase and peroxidase in the biosynthesis pathway of prostanoids, a class of C20 oxylipins mainly derived from arachidonate ((5Z,8Z,11Z,14Z)-eicosatetraenoate, AA, C20:4(n-6)), with a particular role in the inflammatory response. The cyclooxygenase activity oxygenates AA to the hydroperoxy endoperoxide prostaglandin G2 (PGG2), and the peroxidase activity reduces PGG2 to the hydroxy endoperoxide prostaglandin H2 (PGH2), the precursor of all 2-series prostaglandins and thromboxanes. This complex transformation is initiated by abstraction of hydrogen at carbon 13 (with S-stereochemistry), followed by insertion of molecular O2 to form the endoperoxide bridge between carbon 9 and 11 that defines prostaglandins. The insertion of a second molecule of O2 (bis-oxygenase activity) yields a hydroperoxy group in PGG2 that is then reduced to PGH2 by two electrons. Similarly catalyzes successive cyclooxygenation and peroxidation of dihomo-gamma-linoleate (DGLA, C20:3(n-6)) and eicosapentaenoate (EPA, C20:5(n-3)) to corresponding PGH1 and PGH3, the precursors of 1- and 3-series prostaglandins. In an alternative pathway of prostanoid biosynthesis, converts 2-arachidonoyl lysophopholipids to prostanoid lysophopholipids, which are then hydrolyzed by intracellular phospholipases to release free prostanoids. Metabolizes 2-arachidonoyl glycerol yielding the glyceryl ester of PGH2, a process that can contribute to pain response. Generates lipid mediators from n-3 and n-6 polyunsaturated fatty acids (PUFAs) via a lipoxygenase-type mechanism. Oxygenates PUFAs to hydroperoxy compounds and then reduces them to corresponding alcohols. Plays a role in the generation of resolution phase interaction products (resolvins) during both sterile and infectious inflammation. Metabolizes docosahexaenoate (DHA, C22:6(n-3)) to 17R-HDHA, a precursor of the D-series resolvins (RvDs). As a component of the biosynthetic pathway of E-series resolvins (RvEs), converts eicosapentaenoate (EPA, C20:5(n-3)) primarily to 18S-HEPE that is further metabolized by ALOX5 and LTA4H to generate 18S-RvE1 and 18S-RvE2. In vascular endothelial cells, converts docosapentaenoate (DPA, C22:5(n-3)) to 13R-HDPA, a precursor for 13-series resolvins (RvTs) shown to activate macrophage phagocytosis during bacterial infection. In activated leukocytes, contributes to oxygenation of hydroxyeicosatetraenoates (HETE) to diHETES (5,15-diHETE and 5,11-diHETE). Can also use linoleate (LA, (9Z,12Z)-octadecadienoate, C18:2(n-6)) as substrate and produce hydroxyoctadecadienoates (HODEs) in a regio- and stereospecific manner, being (9R)-HODE ((9R)-hydroxy-(10E,12Z)-octadecadienoate) and (13S)-HODE ((13S)-hydroxy-(9Z,11E)-octadecadienoate) its major products. During neuroinflammation, plays a role in neuronal secretion of specialized preresolving mediators (SPMs) 15R-lipoxin A4 that regulates phagocytic microglia. The polypeptide is Prostaglandin G/H synthase 2 (PTGS2) (Cavia porcellus (Guinea pig)).